A 368-amino-acid chain; its full sequence is 3-dehydroquinate synthase (368 aa).

Residues 71 to 76 (DGESFK), 105 to 109 (GVIGD), 129 to 130 (TT), Lys142, Lys151, and 169 to 172 (TLRT) contribute to the NAD(+) site. Glu184, His247, and His264 together coordinate Zn(2+).

It belongs to the sugar phosphate cyclases superfamily. Dehydroquinate synthase family. NAD(+) is required as a cofactor. Co(2+) serves as cofactor. It depends on Zn(2+) as a cofactor.

Its subcellular location is the cytoplasm. The enzyme catalyses 7-phospho-2-dehydro-3-deoxy-D-arabino-heptonate = 3-dehydroquinate + phosphate. The protein operates within metabolic intermediate biosynthesis; chorismate biosynthesis; chorismate from D-erythrose 4-phosphate and phosphoenolpyruvate: step 2/7. Catalyzes the conversion of 3-deoxy-D-arabino-heptulosonate 7-phosphate (DAHP) to dehydroquinate (DHQ). The chain is 3-dehydroquinate synthase from Ralstonia nicotianae (strain ATCC BAA-1114 / GMI1000) (Ralstonia solanacearum).